A 414-amino-acid chain; its full sequence is Probable sugar-binding periplasmic protein (414 aa).

The first 22 residues, 1–22 (MRKFMTTTAVAALMLAATAARA), serve as a signal peptide directing secretion.

The protein belongs to the bacterial solute-binding protein 1 family.

The protein resides in the periplasm. Part of a binding-protein-dependent transport system for a sugar. In Rhizobium meliloti (strain 1021) (Ensifer meliloti), this protein is Probable sugar-binding periplasmic protein.